The sequence spans 138 residues: Basic phospholipase A2 homolog Vur-S49 (138 aa).

The N-terminal stretch at 1–16 (MRALWIVAVCLIGVEG) is a signal peptide. Intrachain disulfides connect Cys42-Cys131, Cys44-Cys60, Cys59-Cys111, Cys65-Cys138, Cys66-Cys104, Cys73-Cys97, and Cys91-Cys102. An important for membrane-damaging activities in eukaryotes and bacteria; heparin-binding region spans residues 121–133 (KKYKVYLRFKCKG).

It belongs to the phospholipase A2 family. Group II subfamily. S49 sub-subfamily. As to expression, expressed by the venom gland.

The protein resides in the secreted. Snake venom phospholipase A2 homolog that lacks enzymatic activity. Is able to suppress the acetylcholine (ACh)-evoked current mediated by alpha-7 (CHRNA7)-similar nAChRs in L.stagnalis neurons (IC(50)=2.18 uM). This activity is only partially reversible and seems to be non-competitive. The polypeptide is Basic phospholipase A2 homolog Vur-S49 (Vipera renardi (Steppe viper)).